A 423-amino-acid polypeptide reads, in one-letter code: Serine--tRNA ligase 1 (423 aa).

231 to 233 (TAE) lines the L-serine pocket. ATP is bound at residue 262–264 (RSE). Glu285 provides a ligand contact to L-serine. 349–352 (EISS) is a binding site for ATP. Ser384 serves as a coordination point for L-serine.

Belongs to the class-II aminoacyl-tRNA synthetase family. Type-1 seryl-tRNA synthetase subfamily. Homodimer. The tRNA molecule binds across the dimer.

Its subcellular location is the cytoplasm. It catalyses the reaction tRNA(Ser) + L-serine + ATP = L-seryl-tRNA(Ser) + AMP + diphosphate + H(+). It carries out the reaction tRNA(Sec) + L-serine + ATP = L-seryl-tRNA(Sec) + AMP + diphosphate + H(+). Its pathway is aminoacyl-tRNA biosynthesis; selenocysteinyl-tRNA(Sec) biosynthesis; L-seryl-tRNA(Sec) from L-serine and tRNA(Sec): step 1/1. Catalyzes the attachment of serine to tRNA(Ser). Is also able to aminoacylate tRNA(Sec) with serine, to form the misacylated tRNA L-seryl-tRNA(Sec), which will be further converted into selenocysteinyl-tRNA(Sec). The protein is Serine--tRNA ligase 1 of Enterococcus faecalis (strain ATCC 700802 / V583).